A 202-amino-acid polypeptide reads, in one-letter code: MVVAMGIGNVLWADEGFGVRCIETLQQRYQFAPQVCLVDGGTQGLYLIHHVQAASRLLIFDAIDYGLPPGTLRIIEDEAVPKFLGAKKMSLHQTGFQEVLLLAQLTGQYPQQVVLIGCQPEELEDYGGSLRRVMKAAVEDAVEKGADLLRRWGGMPVPRTAELAPAEAVTVPHLALDRYEAERPSPRAACRIGDERFMPQDL.

Glu-15, Asp-61, and His-92 together coordinate Ni(2+).

This sequence belongs to the peptidase A31 family.

In terms of biological role, absolutely required for hydrogenase activity. Mediates the attachment of hydrogenase to the bacterial membrane; attachment is a requirement for enzymatic activity. In Cupriavidus necator (strain ATCC 17699 / DSM 428 / KCTC 22496 / NCIMB 10442 / H16 / Stanier 337) (Ralstonia eutropha), this protein is Hydrogenase expression/formation protein HoxM (hoxM).